The sequence spans 173 residues: 16S rRNA aminocarboxypropyltransferase (173 aa).

Positions 25, 72, 96, and 115 each coordinate S-adenosyl-L-methionine.

It belongs to the TDD superfamily. TSR3 family.

Its subcellular location is the cytoplasm. It catalyses the reaction an N(1)-methylpseudouridine in rRNA + S-adenosyl-L-methionine = N(1)-methyl-N(3)-[(3S)-3-amino-3-carboxypropyl]pseudouridine in rRNA + S-methyl-5'-thioadenosine + H(+). Functionally, aminocarboxypropyltransferase that catalyzes the aminocarboxypropyl transfer on pseudouridine corresponding to position 914 in M.jannaschii 16S rRNA. It constitutes the last step in biosynthesis of the hypermodified N1-methyl-N3-(3-amino-3-carboxypropyl) pseudouridine (m1acp3-Psi). The chain is 16S rRNA aminocarboxypropyltransferase from Methanosarcina mazei (strain ATCC BAA-159 / DSM 3647 / Goe1 / Go1 / JCM 11833 / OCM 88) (Methanosarcina frisia).